Consider the following 751-residue polypeptide: Semaphorin-3C (751 aa).

The signal sequence occupies residues 1-21; that stretch reads MAFQAVCILVGVFVCSTYVKG. A Sema domain is found at 28 to 511; that stretch reads RVYLTFDELR…SNEGLAQVSL (484 aa). N81 carries an N-linked (GlcNAc...) asparagine glycan. C101 and C112 are disulfide-bonded. N123 carries an N-linked (GlcNAc...) asparagine glycan. 3 cysteine pairs are disulfide-bonded: C130/C139, C266/C378, and C290/C338. N-linked (GlcNAc...) asparagine glycosylation is present at N268. N465 is a glycosylation site (N-linked (GlcNAc...) asparagine). A disulfide bridge links C514 with C532. The Ig-like C2-type domain maps to 571–655; it reads AYRNAAEIVQ…TENSFKQTIA (85 aa). 2 N-linked (GlcNAc...) asparagine glycosylation sites follow: N585 and N586. The cysteines at positions 592 and 643 are disulfide-linked. The span at 712–731 shows a compositional bias: basic and acidic residues; sequence TRQQHQQGEESQKMRGDYGK. Positions 712-751 are disordered; sequence TRQQHQQGEESQKMRGDYGKLKALINSRKSRNRRNQLPES.

This sequence belongs to the semaphorin family. As to quaternary structure, interacts with PLXND1.

It localises to the secreted. In terms of biological role, binds to plexin family members and plays an important role in the regulation of developmental processes. Required for normal cardiovascular development during embryogenesis. Functions as attractant for growing axons, and thereby plays an important role in axon growth and axon guidance. The sequence is that of Semaphorin-3C (SEMA3C) from Bos taurus (Bovine).